We begin with the raw amino-acid sequence, 230 residues long: V-type proton ATPase subunit E1 (230 aa).

An N-acetylmethionine modification is found at methionine 1. The stretch at 8–67 (RQIQQMVRFIRQEAEEKANEISVSAEEEFNIEKLQLVEAEKKKIRQDYEKKEKQADVRKK) forms a coiled coil. Serine 178 bears the Phosphoserine mark.

The protein belongs to the V-ATPase E subunit family. V-ATPase is a heteromultimeric enzyme composed of a peripheral catalytic V1 complex (components A to H) attached to an integral membrane V0 proton pore complex (components: a, c, c'', d and e).

It is found in the vacuole membrane. Functionally, subunit of the peripheral V1 complex of vacuolar ATPase essential for assembly or catalytic function. V-ATPase is responsible for acidifying a variety of intracellular compartments in eukaryotic cells. Required for Golgi organization and vacuole function in embryogenesis. The chain is V-type proton ATPase subunit E1 (VHA-E1) from Arabidopsis thaliana (Mouse-ear cress).